Consider the following 229-residue polypeptide: MKQYGAEFFGTFWLVLGGCGSAVLAAGVPELGIGYLGVALAFGLSVLTMAYAIGPISGAHLNPAVSVGLWVGGRFPASQLLPYVVAQVLGGLAAGGVLYLIASGKAGFDLAAGFASNGYGEHSPGGYSLQAALVSEVVLTGMFLLIILGATSKRAPQGFAPIAIGLTLTLIHLISIPVTNTSVNPARSTAVALYVGDWAVSQLWLFWVAPILGAVLGALAYRLIGDKND.

Transmembrane regions (helical) follow at residues phenylalanine 8–valine 28 and isoleucine 33–isoleucine 53. The NPA 1 motif lies at asparagine 62–alanine 64. The next 3 membrane-spanning stretches (helical) occupy residues leucine 81–isoleucine 101, alanine 131–threonine 151, and glycine 158–valine 178. The NPA 2 motif lies at asparagine 184 to alanine 186. A helical transmembrane segment spans residues alanine 199 to leucine 219.

Belongs to the MIP/aquaporin (TC 1.A.8) family. As to quaternary structure, homotetramer.

Its subcellular location is the cell inner membrane. It catalyses the reaction H2O(in) = H2O(out). Functionally, channel that permits osmotically driven movement of water in both directions. It is involved in the osmoregulation and in the maintenance of cell turgor during volume expansion in rapidly growing cells. It mediates rapid entry or exit of water in response to abrupt changes in osmolarity. This is Aquaporin Z from Pseudomonas aeruginosa (strain ATCC 15692 / DSM 22644 / CIP 104116 / JCM 14847 / LMG 12228 / 1C / PRS 101 / PAO1).